Here is a 146-residue protein sequence, read N- to C-terminus: 3-dehydroquinate dehydratase (146 aa).

Tyrosine 23 serves as the catalytic Proton acceptor. Substrate contacts are provided by asparagine 74, histidine 80, and aspartate 87. Histidine 100 acts as the Proton donor in catalysis. Substrate-binding positions include isoleucine 101–serine 102 and arginine 111.

Belongs to the type-II 3-dehydroquinase family. As to quaternary structure, homododecamer.

The enzyme catalyses 3-dehydroquinate = 3-dehydroshikimate + H2O. Its pathway is metabolic intermediate biosynthesis; chorismate biosynthesis; chorismate from D-erythrose 4-phosphate and phosphoenolpyruvate: step 3/7. In terms of biological role, catalyzes a trans-dehydration via an enolate intermediate. This Bacillus cereus (strain ATCC 14579 / DSM 31 / CCUG 7414 / JCM 2152 / NBRC 15305 / NCIMB 9373 / NCTC 2599 / NRRL B-3711) protein is 3-dehydroquinate dehydratase.